The primary structure comprises 389 residues: Sulfate adenylyltransferase (389 aa).

Belongs to the sulfate adenylyltransferase family.

It carries out the reaction sulfate + ATP + H(+) = adenosine 5'-phosphosulfate + diphosphate. It functions in the pathway sulfur metabolism; hydrogen sulfide biosynthesis; sulfite from sulfate: step 1/3. This is Sulfate adenylyltransferase from Microcystis aeruginosa (strain NIES-843 / IAM M-2473).